The chain runs to 522 residues: Cell polarity protein mod5 (522 aa).

5 disordered regions span residues 1–83 (MSAL…PDGD), 119–158 (KRSA…FNSN), 170–192 (RRIL…TKSA), 251–285 (PLQP…SPVP), and 300–516 (YSPS…KLEK). 3 stretches are compositionally biased toward polar residues: residues 27–46 (PNTT…SAPS), 66–76 (LPSSKQDTGSS), and 131–146 (NGST…SPSE). Position 43 is a phosphoserine (S43). A compositionally biased stretch (low complexity) spans 258 to 285 (PANETPASSSSSAKARPVSVPDMSSPVP). Residue S303 is modified to Phosphoserine. Residues 308-318 (KVAETDSESRK) show a composition bias toward basic and acidic residues. The segment covering 335-349 (GAQTQSTPNRISRSD) has biased composition (polar residues). S350 bears the Phosphoserine mark. Polar residues-rich tracts occupy residues 363-396 (NAST…TSTN) and 404-431 (DIPQ…TPQV). Low complexity predominate over residues 439 to 452 (SRSSPLPSASVPAL). 2 stretches are compositionally biased toward basic and acidic residues: residues 472–482 (HESEMPPHVTR) and 495–516 (PKEK…KLEK).

In terms of assembly, interacts with tea1 and tea3.

Its subcellular location is the cell membrane. Its function is as follows. With tea1, acts in a positive-feedback loop in the microtubule-mediated regulation of cell polarity. Involved in the anchoring of tea1 at the cortex as well as the correct localization of tea3. This is Cell polarity protein mod5 (mod5) from Schizosaccharomyces pombe (strain 972 / ATCC 24843) (Fission yeast).